The sequence spans 688 residues: Glycine--tRNA ligase beta subunit (688 aa).

The protein belongs to the class-II aminoacyl-tRNA synthetase family. As to quaternary structure, tetramer of two alpha and two beta subunits.

The protein localises to the cytoplasm. The catalysed reaction is tRNA(Gly) + glycine + ATP = glycyl-tRNA(Gly) + AMP + diphosphate. In Haemophilus influenzae (strain PittEE), this protein is Glycine--tRNA ligase beta subunit.